We begin with the raw amino-acid sequence, 131 residues long: Small ribosomal subunit protein bS6 (131 aa).

The tract at residues 100–131 (SPMVKAKDERRERREDFANETSDDADAGDSEE) is disordered. Residues 104-116 (KAKDERRERREDF) show a composition bias toward basic and acidic residues. A compositionally biased stretch (acidic residues) spans 120-131 (TSDDADAGDSEE).

The protein belongs to the bacterial ribosomal protein bS6 family.

In terms of biological role, binds together with bS18 to 16S ribosomal RNA. In Erwinia tasmaniensis (strain DSM 17950 / CFBP 7177 / CIP 109463 / NCPPB 4357 / Et1/99), this protein is Small ribosomal subunit protein bS6.